The following is a 379-amino-acid chain: Cytochrome b (379 aa).

A run of 4 helical transmembrane segments spans residues 33–53, 77–98, 113–133, and 178–198; these read FGSL…FLAM, WLIR…FIHV, WNIG…GYVL, and FFAF…VHLL. Heme b contacts are provided by histidine 83 and histidine 97. Residues histidine 182 and histidine 196 each coordinate heme b. A ubiquinone is bound at residue histidine 201. 4 consecutive transmembrane segments (helical) span residues 226–246, 288–308, 320–340, and 347–367; these read IKDL…ALFF, LGGV…PLLN, ITQT…WIGG, and FTTI…ILMP.

This sequence belongs to the cytochrome b family. As to quaternary structure, the cytochrome bc1 complex contains 11 subunits: 3 respiratory subunits (MT-CYB, CYC1 and UQCRFS1), 2 core proteins (UQCRC1 and UQCRC2) and 6 low-molecular weight proteins (UQCRH/QCR6, UQCRB/QCR7, UQCRQ/QCR8, UQCR10/QCR9, UQCR11/QCR10 and a cleavage product of UQCRFS1). This cytochrome bc1 complex then forms a dimer. It depends on heme b as a cofactor.

Its subcellular location is the mitochondrion inner membrane. Its function is as follows. Component of the ubiquinol-cytochrome c reductase complex (complex III or cytochrome b-c1 complex) that is part of the mitochondrial respiratory chain. The b-c1 complex mediates electron transfer from ubiquinol to cytochrome c. Contributes to the generation of a proton gradient across the mitochondrial membrane that is then used for ATP synthesis. The chain is Cytochrome b (MT-CYB) from Akodon aerosus (Highland grass mouse).